The primary structure comprises 576 residues: Putative export ATP-binding/permease protein RP696 (576 aa).

One can recognise an ABC transmembrane type-1 domain in the interval 20–303 (LIIVMISLLS…IFELLSEMHL (284 aa)). The next 6 helical transmembrane spans lie at 21–41 (IIVMISLLSVSASLLLIGSIF), 61–81 (ILYICLLIVILSVASFFRSYF), 135–155 (FLSFFIRNSVMLIGSITLMFF), 158–178 (FKLASIVIITIPILLVPLIKF), 242–262 (ALFFAISIAVIFLTITLIVWI), and 277–297 (IISFIYYAIIAGVSSGGIFEL). In terms of domain architecture, ABC transporter spans 336–572 (IEFKNVDFTY…SEIYRNICRE (237 aa)). 371–378 (GRSGAGKS) contributes to the ATP binding site.

This sequence belongs to the ABC transporter superfamily. Homodimer.

It is found in the cell inner membrane. Part of an ABC transporter complex. Transmembrane domains (TMD) form a pore in the inner membrane and the ATP-binding domain (NBD) is responsible for energy generation. In Rickettsia prowazekii (strain Madrid E), this protein is Putative export ATP-binding/permease protein RP696.